The following is a 239-amino-acid chain: Transcriptional activatory protein AadR (239 aa).

Isoleucine 27–glutamine 149 provides a ligand contact to a nucleoside 3',5'-cyclic phosphate. An HTH crp-type domain is found at arginine 158–lysine 231. Positions arginine 191 to threonine 210 form a DNA-binding region, H-T-H motif.

In terms of biological role, transcriptional activator of anaerobic gene expression. For aromatic acid degradation. Also required for the anaerobic degradation of benzoate. The polypeptide is Transcriptional activatory protein AadR (aadR) (Rhodopseudomonas palustris (strain ATCC BAA-98 / CGA009)).